The following is a 438-amino-acid chain: ATP-dependent RNA helicase RhlB (438 aa).

The Q motif signature appears at 9 to 37 (QRFADLPLHPEVKQALAENGFEFCTPIQA). The Helicase ATP-binding domain maps to 40–219 (LPVLLQSKDI…YDHMNEPVKV (180 aa)). Residue 53 to 60 (AQTGTGKT) coordinates ATP. The short motif at 165–168 (DEAD) is the DEAD box element. The Helicase C-terminal domain occupies 243 to 390 (KMRLLLTLIE…VSNYDSEALL (148 aa)). The segment at 395-438 (TPAKIHRKHPSGTRNLRDRSGTSRPGAQRSGARPPRHDRTRRHS) is disordered. A compositionally biased stretch (basic residues) spans 428–438 (PPRHDRTRRHS).

This sequence belongs to the DEAD box helicase family. RhlB subfamily. As to quaternary structure, component of the RNA degradosome, which is a multiprotein complex involved in RNA processing and mRNA degradation.

Its subcellular location is the cytoplasm. It catalyses the reaction ATP + H2O = ADP + phosphate + H(+). DEAD-box RNA helicase involved in RNA degradation. Has RNA-dependent ATPase activity and unwinds double-stranded RNA. This chain is ATP-dependent RNA helicase RhlB, found in Shewanella baltica (strain OS223).